We begin with the raw amino-acid sequence, 466 residues long: Ribulose bisphosphate carboxylase large chain (466 aa).

Lys5 carries the N6,N6,N6-trimethyllysine modification. Positions 114 and 164 each coordinate substrate. Lys166 functions as the Proton acceptor in the catalytic mechanism. Lys168 is a substrate binding site. 3 residues coordinate Mg(2+): Lys192, Asp194, and Glu195. An N6-carboxylysine modification is found at Lys192. The active-site Proton acceptor is His285. Substrate is bound by residues Arg286, His318, and Ser370.

Belongs to the RuBisCO large chain family. Type I subfamily. Heterohexadecamer of 8 large chains and 8 small chains; disulfide-linked. The disulfide link is formed within the large subunit homodimers. Requires Mg(2+) as cofactor. The disulfide bond which can form in the large chain dimeric partners within the hexadecamer appears to be associated with oxidative stress and protein turnover.

It is found in the plastid. The protein localises to the chloroplast. The catalysed reaction is 2 (2R)-3-phosphoglycerate + 2 H(+) = D-ribulose 1,5-bisphosphate + CO2 + H2O. The enzyme catalyses D-ribulose 1,5-bisphosphate + O2 = 2-phosphoglycolate + (2R)-3-phosphoglycerate + 2 H(+). Its function is as follows. RuBisCO catalyzes two reactions: the carboxylation of D-ribulose 1,5-bisphosphate, the primary event in carbon dioxide fixation, as well as the oxidative fragmentation of the pentose substrate in the photorespiration process. Both reactions occur simultaneously and in competition at the same active site. The chain is Ribulose bisphosphate carboxylase large chain from Moringa oleifera (Horseradish tree).